Reading from the N-terminus, the 137-residue chain is Endoribonuclease YbeY (137 aa).

Zn(2+) is bound by residues His-103, His-107, and His-113.

It belongs to the endoribonuclease YbeY family. Requires Zn(2+) as cofactor.

It is found in the cytoplasm. Single strand-specific metallo-endoribonuclease involved in late-stage 70S ribosome quality control and in maturation of the 3' terminus of the 16S rRNA. In Acholeplasma laidlawii (strain PG-8A), this protein is Endoribonuclease YbeY.